Here is an 807-residue protein sequence, read N- to C-terminus: Phenylalanine--tRNA ligase beta subunit (807 aa).

Residues 39 to 153 form the tRNA-binding domain; sequence SARSQGVVVG…EIPAVGTPVA (115 aa). The B5 domain maps to 407-491; that stretch reads RTPVPLQLRR…RLVGFDKFGS (85 aa). Residues aspartate 469, aspartate 475, glutamate 478, and glutamate 479 each coordinate Mg(2+). Positions 713-806 constitute an FDX-ACB domain; it reads PTVPASERDL…LSKQFKAELR (94 aa).

This sequence belongs to the phenylalanyl-tRNA synthetase beta subunit family. Type 1 subfamily. In terms of assembly, tetramer of two alpha and two beta subunits. Mg(2+) is required as a cofactor.

It is found in the cytoplasm. It carries out the reaction tRNA(Phe) + L-phenylalanine + ATP = L-phenylalanyl-tRNA(Phe) + AMP + diphosphate + H(+). In Synechococcus sp. (strain CC9902), this protein is Phenylalanine--tRNA ligase beta subunit.